The sequence spans 200 residues: Outer-membrane lipoprotein LolB (200 aa).

The signal sequence occupies residues 1 to 18; that stretch reads MRRGRLLIAGLAALVLSA. Cysteine 19 is lipidated: N-palmitoyl cysteine. Cysteine 19 carries the S-diacylglycerol cysteine lipid modification.

This sequence belongs to the LolB family. As to quaternary structure, monomer.

Its subcellular location is the cell outer membrane. Plays a critical role in the incorporation of lipoproteins in the outer membrane after they are released by the LolA protein. The polypeptide is Outer-membrane lipoprotein LolB (Alkalilimnicola ehrlichii (strain ATCC BAA-1101 / DSM 17681 / MLHE-1)).